The chain runs to 231 residues: uncharacterized protein (231 aa).

Transmembrane regions (helical) follow at residues 6–26 (IKLI…YKYI), 39–59 (NIVS…STFS), and 66–86 (FCFQ…GYAF).

It localises to the cell membrane. This is an uncharacterized protein from Rickettsia prowazekii (strain Madrid E).